A 417-amino-acid polypeptide reads, in one-letter code: Gamma-glutamyl phosphate reductase (417 aa).

The protein belongs to the gamma-glutamyl phosphate reductase family.

The protein localises to the cytoplasm. The catalysed reaction is L-glutamate 5-semialdehyde + phosphate + NADP(+) = L-glutamyl 5-phosphate + NADPH + H(+). It participates in amino-acid biosynthesis; L-proline biosynthesis; L-glutamate 5-semialdehyde from L-glutamate: step 2/2. Its function is as follows. Catalyzes the NADPH-dependent reduction of L-glutamate 5-phosphate into L-glutamate 5-semialdehyde and phosphate. The product spontaneously undergoes cyclization to form 1-pyrroline-5-carboxylate. The polypeptide is Gamma-glutamyl phosphate reductase (Shigella boydii serotype 18 (strain CDC 3083-94 / BS512)).